The primary structure comprises 441 residues: Tol-Pal system protein TolB (441 aa).

Positions Met-1–Ala-23 are cleaved as a signal peptide. The segment at Arg-420 to Asn-441 is disordered.

This sequence belongs to the TolB family. In terms of assembly, the Tol-Pal system is composed of five core proteins: the inner membrane proteins TolA, TolQ and TolR, the periplasmic protein TolB and the outer membrane protein Pal. They form a network linking the inner and outer membranes and the peptidoglycan layer.

It is found in the periplasm. Functionally, part of the Tol-Pal system, which plays a role in outer membrane invagination during cell division and is important for maintaining outer membrane integrity. The protein is Tol-Pal system protein TolB of Ruegeria sp. (strain TM1040) (Silicibacter sp.).